Reading from the N-terminus, the 377-residue chain is Chaperone protein DnaJ (377 aa).

Residues 8–73 enclose the J domain; sequence CYYETLEVER…DKRAAYDRFG (66 aa). Residues 135 to 213 form a CR-type zinc finger; that stretch reads GKTAQIEIPV…CSGQGRVTRE (79 aa). Zn(2+) is bound by residues Cys-148, Cys-151, Cys-165, Cys-168, Cys-187, Cys-190, Cys-201, and Cys-204. 4 CXXCXGXG motif repeats span residues 148 to 155, 165 to 172, 187 to 194, and 201 to 208; these read CEACSGIG, CSTCGGAG, CPGCQGRG, and CPSCSGQG.

Belongs to the DnaJ family. In terms of assembly, homodimer. It depends on Zn(2+) as a cofactor.

It is found in the cytoplasm. Functionally, participates actively in the response to hyperosmotic and heat shock by preventing the aggregation of stress-denatured proteins and by disaggregating proteins, also in an autonomous, DnaK-independent fashion. Unfolded proteins bind initially to DnaJ; upon interaction with the DnaJ-bound protein, DnaK hydrolyzes its bound ATP, resulting in the formation of a stable complex. GrpE releases ADP from DnaK; ATP binding to DnaK triggers the release of the substrate protein, thus completing the reaction cycle. Several rounds of ATP-dependent interactions between DnaJ, DnaK and GrpE are required for fully efficient folding. Also involved, together with DnaK and GrpE, in the DNA replication of plasmids through activation of initiation proteins. The protein is Chaperone protein DnaJ of Bradyrhizobium diazoefficiens (strain JCM 10833 / BCRC 13528 / IAM 13628 / NBRC 14792 / USDA 110).